Reading from the N-terminus, the 33-residue chain is Cytochrome b6-f complex subunit 8 (33 aa).

Residues Leu2 to Val22 form a helical membrane-spanning segment.

It belongs to the PetN family. As to quaternary structure, the 4 large subunits of the cytochrome b6-f complex are cytochrome b6, subunit IV (17 kDa polypeptide, PetD), cytochrome f and the Rieske protein, while the 4 small subunits are PetG, PetL, PetM and PetN. The complex functions as a dimer.

It localises to the cellular thylakoid membrane. Its function is as follows. Component of the cytochrome b6-f complex, which mediates electron transfer between photosystem II (PSII) and photosystem I (PSI), cyclic electron flow around PSI, and state transitions. The chain is Cytochrome b6-f complex subunit 8 from Prochlorococcus marinus (strain SARG / CCMP1375 / SS120).